A 360-amino-acid chain; its full sequence is MVKVVKNFVKVNQYTRPGLKLAGVKGIVMHYTATPGASALNERDYFNGTCIAIKRKASSAHYFVDRKEAQHIIPENEVAYHAHDKNRCYVSFLKPNANTKSISVEMCVEKDGMIHSETVQNAAELVADLCKRYGLSTNKIVRHYDVTNKICPAPWVSDSSQLTTFRKKVDSLLGNKTVSKTTSSTSQSSKSTGTILKKGASGSQVKALQKRLIAAGFSLPKYGADGSYENETVQAVKALQKKAGIAVDGIYGPATEKALAAIGAKKKKPSSNGKKTSYPLPSGIYKVKSPLMKGTGVRQIQEALAALYFYPDKGAKNNGIDGYYGPKTANAVKRFQLMHGLSADGIYGSDTKAKLKTLLK.

The signal sequence occupies residues 1-39 (MVKVVKNFVKVNQYTRPGLKLAGVKGIVMHYTATPGASA). In terms of domain architecture, N-acetylmuramoyl-L-alanine amidase spans 40–154 (LNERDYFNGT…DVTNKICPAP (115 aa)). A run of 4 repeats spans residues 166–191 (RKKVDSLLGNKTVSKTTSSTSQSSKS), 196–259 (LKKG…EKAL), 265–289 (KKKKPSSNGKKTSYPLPSGIYKVKS), and 291–355 (LMKG…KAKL). 2 X approximate repeats stretches follow at residues 166–289 (RKKV…KVKS) and 196–355 (LKKG…KAKL).

It belongs to the N-acetylmuramoyl-L-alanine amidase 2 family.

It is found in the secreted. It catalyses the reaction Hydrolyzes the link between N-acetylmuramoyl residues and L-amino acid residues in certain cell-wall glycopeptides.. The sequence is that of N-acetylmuramoyl-L-alanine amidase CwlL (cwlL) from Bacillus licheniformis.